The following is a 445-amino-acid chain: MSGAYDESAMSDETTDSFWEVGNYKRTVKRIEDGHRLCNDMMSCIQERAKIEKAYSQQLTDWSKRWRQLVERGPQYGTLERAWLAVMTEAEKVSELHQEVKNNLLNEDLEKVKNWQKDAYHKQMMGGFKETKEADEGFRKAQKPWAKKLKELETAKKTYHMACKEEKIASAREANSKGEASVTTDQQKKLQEKVDKCKNDVQKAKEKYEKSLDELNKCTPQYMENMEVVFDQCQQFEEKRLNFLREVLLDTKRHLNLTESQSYATVYRELERTIVSASAQEDLKWFSSVHGPGMHMNWPQFEEFNPDLSHAISKKEKVKRNHDGVTLTQVTHGAEHGTPQTGDRGSVSSYEKNQQYSAEWSDDEQPPTAAQSASETNGGNPFEEDSKGVRVRALYDYEGQEQDELTFKAGDELTKLEDEDEQGWCKGRLDSGQLGLYPANYVEPV.

The region spanning 12–282 is the F-BAR domain; it reads DETTDSFWEV…TIVSASAQED (271 aa). 2 coiled-coil regions span residues 146–167 and 183–219; these read AKKL…KEEK and TTDQ…NKCT. Residues 327–390 form a disordered region; the sequence is LTQVTHGAEH…PFEEDSKGVR (64 aa). Polar residues-rich tracts occupy residues 338–358 and 368–379; these read TPQT…QYSA and TAAQSASETNGG. Residues 386-445 form the SH3 domain; that stretch reads SKGVRVRALYDYEGQEQDELTFKAGDELTKLEDEDEQGWCKGRLDSGQLGLYPANYVEPV.

As to quaternary structure, interacts with cobl.

Its subcellular location is the cytoplasm. The protein resides in the cytosol. It localises to the cell membrane. The protein localises to the cell projection. It is found in the synapse. Its subcellular location is the synaptosome. The protein resides in the cytoplasmic vesicle membrane. It localises to the ruffle membrane. The protein localises to the membrane. In terms of biological role, binds to membranes via its F-BAR domain and mediates membrane tubulation. Plays a role in cellular transport processes by recruiting dynamins to membranes. Plays a role in the reorganization of the actin cytoskeleton and in neuron morphogenesis via its interaction with cobl, and by recruiting cobl to the cell cortex. Plays a role in the regulation of neurite formation, neurite branching and the regulation of neurite length. Required for normal synaptic vesicle endocytosis; this process retrieves previously released neurotransmitters to accommodate multiple cycles of neurotransmission. Required for normal excitatory and inhibitory synaptic transmission. Required for normal embryonic development, including normal development of laterality, normal body size and shape, as well as normal brain and heart development. Required for normal development of stereocilia and kinocilia in sensory hair cells of neuromasts in the posterior lateral line organ, and thus also for balance keeping and normal swimming behavior. The protein is Protein kinase C and casein kinase substrate in neurons protein 1 (pacsin1b) of Danio rerio (Zebrafish).